The primary structure comprises 91 residues: Acylphosphatase (91 aa).

The Acylphosphatase-like domain maps to 4–91; it reads RAIVTIKGLV…GEFDDFDVRY (88 aa). Catalysis depends on residues arginine 19 and asparagine 37.

It belongs to the acylphosphatase family.

The catalysed reaction is an acyl phosphate + H2O = a carboxylate + phosphate + H(+). The protein is Acylphosphatase (acyP) of Geobacter sulfurreducens (strain ATCC 51573 / DSM 12127 / PCA).